A 177-amino-acid chain; its full sequence is HVA22-like protein a (177 aa).

3 consecutive transmembrane segments (helical) span residues 18–38, 47–67, and 68–88; these read VLAG…QAIE, QWLT…TFAK, and LIEW…WLVI.

It belongs to the DP1 family. In terms of tissue distribution, predominantly expressed in flower buds and stem.

The protein resides in the membrane. The protein is HVA22-like protein a (HVA22A) of Arabidopsis thaliana (Mouse-ear cress).